The sequence spans 119 residues: Multi-drug resistance efflux pump PmrA homolog (119 aa).

4 helical membrane passes run 1–20 (ILIG…FVQS), 22–42 (LQLG…MPSV), 64–84 (MCSN…AGYI), and 88–108 (AAIV…FINF).

Belongs to the major facilitator superfamily.

It is found in the cell membrane. This chain is Multi-drug resistance efflux pump PmrA homolog (pmrA), found in Lactococcus lactis subsp. cremoris (Streptococcus cremoris).